The primary structure comprises 426 residues: Serine--tRNA ligase (426 aa).

233–235 (TAE) contacts L-serine. 264 to 266 (RRE) is an ATP binding site. Residue Glu287 coordinates L-serine. An ATP-binding site is contributed by 351–354 (EISS). Ser386 is a binding site for L-serine.

This sequence belongs to the class-II aminoacyl-tRNA synthetase family. Type-1 seryl-tRNA synthetase subfamily. In terms of assembly, homodimer. The tRNA molecule binds across the dimer.

Its subcellular location is the cytoplasm. It carries out the reaction tRNA(Ser) + L-serine + ATP = L-seryl-tRNA(Ser) + AMP + diphosphate + H(+). The catalysed reaction is tRNA(Sec) + L-serine + ATP = L-seryl-tRNA(Sec) + AMP + diphosphate + H(+). The protein operates within aminoacyl-tRNA biosynthesis; selenocysteinyl-tRNA(Sec) biosynthesis; L-seryl-tRNA(Sec) from L-serine and tRNA(Sec): step 1/1. Functionally, catalyzes the attachment of serine to tRNA(Ser). Is also able to aminoacylate tRNA(Sec) with serine, to form the misacylated tRNA L-seryl-tRNA(Sec), which will be further converted into selenocysteinyl-tRNA(Sec). The polypeptide is Serine--tRNA ligase (Thermosipho africanus (strain TCF52B)).